The chain runs to 640 residues: MGCGSSSKKGKKSEKVVRAALIIQNWYRRYRARLSARQHYALAIFQSIEYADEQGQMQLSSFFSFMLENYTNTHKEDSALVSRLFENTRLESKDREEYVGLIDVPDSYDGPRLQFPLTFTDINLLLQAFKQQQTLHAHYVLEVLFEARKILKQMPNFTRIQTFPAKEITICGDLHGKLDDLMLIFYKNGLPSEKNPYVFNGDFVDRGNNSMEILMILLVSFLVYPTDLHLNRGNHEDFMMNLRYGFTKEILQKYKLHGKKILQVLEELYTWLPIGTIIDNEILVIHGGISESTDLNILQQLQRNKMKSVLMPPMSTNQECNIKKNKAGPSEQSASEQLTKLEWEQIIDLLWSDPRGKKGCYPNTSRGGGCYFGPDVTSKVLNKNQLKMVIRSHECKPDGYEICHDGKVITVFSASNYYEEGSNRGAYIRLSYGTSPQFFQYQVTSTSCLNPLYQRVNAMEFSAFRILKERMIARKTDLINAFELRDHSRTGKISLAQWAFSMESILGLNLPWRSLSSHLVSTDSSGSVDYMSSFDDIHIEKPMKDMKSDLIETMYRYRSDLKIIFNIIDTDQSGLISMDEFRTMWKLFNAHYKVHIDDSQIDELASTMDSNKDGNIDFNEFLRAFYVVHKYETPESPLNK.

The 30-residue stretch at Val16 to Phe45 folds into the IQ domain. The interval Ile122–Ser445 is catalytic. Asp173, His175, Asp202, and Asn234 together coordinate Mn(2+). Catalysis depends on His235, which acts as the Proton donor. Mn(2+) is bound by residues His286 and His393. EF-hand domains are found at residues Ala473–Leu508, Arg556–His591, and Ile596–Tyr631. Residues Asp569, Asp571, Ser573, Glu580, Asp609, Asn611, Asp613, Asn615, and Glu620 each contribute to the Ca(2+) site.

It belongs to the PPP phosphatase family. It depends on Mn(2+) as a cofactor. The cofactor is Mg(2+).

It catalyses the reaction O-phospho-L-seryl-[protein] + H2O = L-seryl-[protein] + phosphate. It carries out the reaction O-phospho-L-threonyl-[protein] + H2O = L-threonyl-[protein] + phosphate. Its activity is regulated as follows. Activated by calcium. May have a role in the recovery or adaptation response of photoreceptors. May have a role in development. The protein is Serine/threonine-protein phosphatase with EF-hands 1 (Ppef1) of Rattus norvegicus (Rat).